The following is a 678-amino-acid chain: Protein CASP (678 aa).

The Cytoplasmic portion of the chain corresponds to 1–619 (MAANVGSMSQ…LILSNKTART (619 aa)). Coiled coils occupy residues 16 to 40 (DLQQ…ESEQ), 67 to 374 (LLKS…TLKS), 427 to 454 (HLTE…TIQS), and 502 to 556 (LSII…FLQS). Residue S586 is modified to Phosphoserine. The chain crosses the membrane as a helical; Anchor for type IV membrane protein span at residues 620–640 (IGFFYTLFLHCLVFLVLYKLA). Residues 641–678 (WSESVERDCAATCAKKFADHLHKFHESDNGAAAGDLWQ) are Lumenal-facing.

This sequence belongs to the CASP family. In terms of assembly, homodimer; disulfide-linked. Interacts with GOLGA5. As to expression, ubiquitously expressed.

The protein localises to the golgi apparatus membrane. Its function is as follows. May be involved in intra-Golgi retrograde transport. This is Protein CASP (Cux1) from Mus musculus (Mouse).